The chain runs to 145 residues: Transcription antitermination protein NusB (145 aa).

It belongs to the NusB family.

Involved in transcription antitermination. Required for transcription of ribosomal RNA (rRNA) genes. Binds specifically to the boxA antiterminator sequence of the ribosomal RNA (rrn) operons. The chain is Transcription antitermination protein NusB from Citrifermentans bemidjiense (strain ATCC BAA-1014 / DSM 16622 / JCM 12645 / Bem) (Geobacter bemidjiensis).